The chain runs to 168 residues: Transcription antitermination protein NusB (168 aa).

Positions 147–168 (RGLINNSSRNTSRSEEKHSTEK) are disordered. The span at 158–168 (SRSEEKHSTEK) shows a compositional bias: basic and acidic residues.

The protein belongs to the NusB family.

Involved in transcription antitermination. Required for transcription of ribosomal RNA (rRNA) genes. Binds specifically to the boxA antiterminator sequence of the ribosomal RNA (rrn) operons. This is Transcription antitermination protein NusB from Chlorobium phaeobacteroides (strain BS1).